Reading from the N-terminus, the 164-residue chain is Interferon gamma (164 aa).

Positions 1–19 are cleaved as a signal peptide; the sequence is MTCQTYNLFVLSVIMIYYG. 2 N-linked (GlcNAc...) asparagine glycosylation sites follow: Asn-42 and Asn-61.

Belongs to the type II (or gamma) interferon family. In terms of assembly, homodimer.

It is found in the secreted. Its function is as follows. Produced by lymphocytes activated by specific antigens or mitogens. IFN-gamma, in addition to having antiviral activity, has important immunoregulatory functions. It is a potent activator of macrophages, it has antiproliferative effects on transformed cells and it can potentiate the antiviral and antitumor effects of the type I interferons. This chain is Interferon gamma (IFNG), found in Phasianus colchicus colchicus (Black-necked pheasant).